Reading from the N-terminus, the 244-residue chain is Multiple organellar RNA editing factor 3, mitochondrial (244 aa).

Residues 1–62 constitute a mitochondrion transit peptide; it reads MALISTRRTL…GPCYISTRPK (62 aa). 2 disordered regions span residues 59-82 and 196-244; these read TRPK…SNRP and YRFT…KPSA. A compositionally biased stretch (polar residues) spans 60–80; that stretch reads RPKTSGSGYSPLNDPSPNWSN. Residues 210 to 226 show a composition bias toward basic and acidic residues; that stretch reads PRYDRRRETMQVERREP.

The protein belongs to the MORF family. As to quaternary structure, heterodimer with MORF1. Homodimer and heterodimers with MORF8/RIP1, MORF4/RIP4 and MORF5/RIP5.

The protein localises to the mitochondrion. Its function is as follows. Involved in organellar RNA editing. Required for the processing of RNA editing sites in mitochondria. The chain is Multiple organellar RNA editing factor 3, mitochondrial from Arabidopsis thaliana (Mouse-ear cress).